The primary structure comprises 289 residues: Phosphoribulokinase (289 aa).

12–20 (GSSGAGTTT) contacts ATP.

This sequence belongs to the phosphoribulokinase family.

The enzyme catalyses D-ribulose 5-phosphate + ATP = D-ribulose 1,5-bisphosphate + ADP + H(+). The protein operates within carbohydrate biosynthesis; Calvin cycle. The chain is Phosphoribulokinase (cbbP) from Sinorhizobium medicae (strain WSM419) (Ensifer medicae).